The chain runs to 269 residues: Tryptophan synthase alpha chain (269 aa).

Residues glutamate 49 and aspartate 60 each act as proton acceptor in the active site.

It belongs to the TrpA family. Tetramer of two alpha and two beta chains.

The enzyme catalyses (1S,2R)-1-C-(indol-3-yl)glycerol 3-phosphate + L-serine = D-glyceraldehyde 3-phosphate + L-tryptophan + H2O. The protein operates within amino-acid biosynthesis; L-tryptophan biosynthesis; L-tryptophan from chorismate: step 5/5. Functionally, the alpha subunit is responsible for the aldol cleavage of indoleglycerol phosphate to indole and glyceraldehyde 3-phosphate. The sequence is that of Tryptophan synthase alpha chain from Cronobacter sakazakii (strain ATCC BAA-894) (Enterobacter sakazakii).